Reading from the N-terminus, the 103-residue chain is Cell division topological specificity factor (103 aa).

The protein belongs to the MinE family.

Prevents the cell division inhibition by proteins MinC and MinD at internal division sites while permitting inhibition at polar sites. This ensures cell division at the proper site by restricting the formation of a division septum at the midpoint of the long axis of the cell. The chain is Cell division topological specificity factor from Prochlorococcus marinus (strain MIT 9211).